The chain runs to 263 residues: Acyl-[acyl-carrier-protein]--UDP-N-acetylglucosamine O-acyltransferase (263 aa).

The protein belongs to the transferase hexapeptide repeat family. LpxA subfamily. As to quaternary structure, homotrimer.

It localises to the cytoplasm. The enzyme catalyses a (3R)-hydroxyacyl-[ACP] + UDP-N-acetyl-alpha-D-glucosamine = a UDP-3-O-[(3R)-3-hydroxyacyl]-N-acetyl-alpha-D-glucosamine + holo-[ACP]. It functions in the pathway glycolipid biosynthesis; lipid IV(A) biosynthesis; lipid IV(A) from (3R)-3-hydroxytetradecanoyl-[acyl-carrier-protein] and UDP-N-acetyl-alpha-D-glucosamine: step 1/6. In terms of biological role, involved in the biosynthesis of lipid A, a phosphorylated glycolipid that anchors the lipopolysaccharide to the outer membrane of the cell. The sequence is that of Acyl-[acyl-carrier-protein]--UDP-N-acetylglucosamine O-acyltransferase from Aeromonas salmonicida (strain A449).